A 318-amino-acid polypeptide reads, in one-letter code: Petal death protein (318 aa).

The propeptide at 1-3 is removed in mature form; that stretch reads MAP. A disordered region spans residues 1–24; the sequence is MAPPNGTTNGETEVATQGSYTAVS. Residues Asp107, Asp109, and Lys142 each contribute to the Mg(2+) site.

Belongs to the isocitrate lyase/PEP mutase superfamily. In terms of assembly, homodimer and homotetramer formed by a dimer of homodimer. Mg(2+) is required as a cofactor. Mn(2+) serves as cofactor. The cofactor is Fe(2+). It depends on Co(2+) as a cofactor. In terms of tissue distribution, accumulates in senescing flower petals.

The catalysed reaction is oxaloacetate + H2O = oxalate + acetate + H(+). Catalyzes cleavage of the C(2)-C(3) bond in oxaloacetate and in (2R)-alkyl malate derivatives to form oxalate and acetate, and alkyl carboxylates and R-ketocarboxylates, respectively. This chain is Petal death protein, found in Dianthus caryophyllus (Carnation).